We begin with the raw amino-acid sequence, 219 residues long: Ras-related protein Rab-3B (219 aa).

Residue alanine 2 is modified to N-acetylalanine. Serine 31, serine 32, valine 33, glycine 34, lysine 35, threonine 36, serine 37, proline 49, and serine 53 together coordinate GTP. Mg(2+) is bound at residue threonine 36. The short motif at 45–58 (DTFTPAFVSTVGID) is the Switch 1 element. Threonine 54 and aspartate 77 together coordinate Mg(2+). The Switch 2 signature appears at 78–96 (TAGQERYRTITTAYYRGAM). Residue glycine 80 coordinates GTP. Residue threonine 86 is modified to Phosphothreonine. GTP-binding residues include asparagine 135, lysine 136, aspartate 138, alanine 166, and lysine 167. Residues serine 188 and serine 190 each carry the phosphoserine modification. Residues cysteine 217 and cysteine 219 are each lipidated (S-geranylgeranyl cysteine). Cysteine 219 is subject to Cysteine methyl ester.

Belongs to the small GTPase superfamily. Rab family. As to quaternary structure, interacts with RIMS1, RIMS2, RPH3A and RPH3AL. The GTP-bound form interacts with GAS8/DRC4 (via coiled-coil domains). Interacts with GDI2, CHM and CHML; phosphorylation at Thr-86 disrupts these interactions. Interacts with MADD (via uDENN domain); the GTP-bound form is preferred for interaction. Mg(2+) is required as a cofactor. Phosphorylation of Thr-86 in the switch II region by LRRK2 prevents the association of RAB regulatory proteins, including CHM, CHML and RAB GDP dissociation inhibitor GDI2.

It localises to the cell membrane. Its subcellular location is the golgi apparatus. It catalyses the reaction GTP + H2O = GDP + phosphate + H(+). Its activity is regulated as follows. Regulated by guanine nucleotide exchange factors (GEFs) which promote the exchange of bound GDP for free GTP. Regulated by GTPase activating proteins (GAPs) which increase the GTP hydrolysis activity. Inhibited by GDP dissociation inhibitors (GDIs) which prevent Rab-GDP dissociation. Its function is as follows. The small GTPases Rab are key regulators of intracellular membrane trafficking, from the formation of transport vesicles to their fusion with membranes. Rabs cycle between an inactive GDP-bound form and an active GTP-bound form that is able to recruit to membranes different sets of downstream effectors directly responsible for vesicle formation, movement, tethering and fusion. The chain is Ras-related protein Rab-3B (RAB3B) from Mesocricetus auratus (Golden hamster).